A 545-amino-acid chain; its full sequence is Toxin BC_0920 (545 aa).

Positions 1–217 (MSLNMYLGEV…ARQAANSIEE (217 aa)) constitute an LXG domain.

In the N-terminal section; belongs to the LXG family. The protein in the C-terminal section; belongs to the bacterial EndoU family. As to quaternary structure, probably interacts with cognate immunity protein BC_0921. The interaction inhibits the toxic activity of BC_0921.

Its subcellular location is the secreted. Its function is as follows. Toxic component of an LXG toxin-immunity module. The C-terminus (residues 322-545) has RNase activity in E.coli which is neutralized by cognate immunity protein BC_0921, but not by immunity proteins specific to other toxins with the LXG domain. Degrades 5S rRNA and several tRNAs in vitro; cleavage is endonucleolytic within the anticodon loop for tRNA(GAU-Ile) and tRNA(UUC-Glu) but total for 5S rRNA and at least one other tRNA. RNase activity is suppressed by cognate immunity protein BC_0921. The chain is Toxin BC_0920 from Bacillus cereus (strain ATCC 14579 / DSM 31 / CCUG 7414 / JCM 2152 / NBRC 15305 / NCIMB 9373 / NCTC 2599 / NRRL B-3711).